A 98-amino-acid chain; its full sequence is Small ribosomal subunit protein bS20 (98 aa).

This sequence belongs to the bacterial ribosomal protein bS20 family.

In terms of biological role, binds directly to 16S ribosomal RNA. The chain is Small ribosomal subunit protein bS20 from Kosmotoga olearia (strain ATCC BAA-1733 / DSM 21960 / TBF 19.5.1).